Consider the following 453-residue polypeptide: Chromosomal replication initiator protein DnaA (453 aa).

Residues 1–75 (MSENMEELWS…SLKKISGKQL (75 aa)) are domain I, interacts with DnaA modulators. Positions 75-114 (LKIKFLLPGEKIKMEEQNNENEEKPESTSKKSSQGSEHTT) are domain II. The span at 87–103 (KMEEQNNENEEKPESTS) shows a compositional bias: basic and acidic residues. The tract at residues 87 to 112 (KMEEQNNENEEKPESTSKKSSQGSEH) is disordered. The interval 115–331 (WLNPKYTFDT…GGLIRVIAYS (217 aa)) is domain III, AAA+ region. G159, G161, K162, and T163 together coordinate ATP. The tract at residues 332-453 (SMANKKITKE…DEIKNLLHGD (122 aa)) is domain IV, binds dsDNA.

Belongs to the DnaA family. In terms of assembly, oligomerizes as a right-handed, spiral filament on DNA at oriC.

The protein localises to the cytoplasm. Its function is as follows. Plays an essential role in the initiation and regulation of chromosomal replication. ATP-DnaA binds to the origin of replication (oriC) to initiate formation of the DNA replication initiation complex once per cell cycle. Binds the DnaA box (a 9 base pair repeat at the origin) and separates the double-stranded (ds)DNA. Forms a right-handed helical filament on oriC DNA; dsDNA binds to the exterior of the filament while single-stranded (ss)DNA is stabiized in the filament's interior. The ATP-DnaA-oriC complex binds and stabilizes one strand of the AT-rich DNA unwinding element (DUE), permitting loading of DNA polymerase. After initiation quickly degrades to an ADP-DnaA complex that is not apt for DNA replication. Binds acidic phospholipids. The protein is Chromosomal replication initiator protein DnaA of Natranaerobius thermophilus (strain ATCC BAA-1301 / DSM 18059 / JW/NM-WN-LF).